The chain runs to 898 residues: Chitin synthase 1 (898 aa).

The disordered stretch occupies residues 1-154 (MDPRYGAQPM…PPQQGGGIQR (154 aa)). Positions 9 to 21 (PMPPRRSPSPGHP) are enriched in pro residues. 2 stretches are compositionally biased toward polar residues: residues 64–75 (DHLSLNAAQSVD) and 136–146 (DVPSEQYQDPP). The next 5 membrane-spanning stretches (helical) occupy residues 441–461 (SAFG…YVAL), 540–560 (RWLN…LDFL), 570–590 (FAFF…WFAI), 616–636 (ILGV…FVLS), and 651–671 (MCWF…FISV). An N-linked (GlcNAc...) asparagine glycan is attached at Asn685. A run of 4 helical transmembrane segments spans residues 697–717 (MLII…LIML), 726–746 (FAQY…YAFC), 825–845 (GVVL…LSSA), and 870–890 (IVLW…MWFL).

It belongs to the chitin synthase family. Class I subfamily.

It is found in the cell membrane. It carries out the reaction [(1-&gt;4)-N-acetyl-beta-D-glucosaminyl](n) + UDP-N-acetyl-alpha-D-glucosamine = [(1-&gt;4)-N-acetyl-beta-D-glucosaminyl](n+1) + UDP + H(+). In terms of biological role, polymerizes chitin, a structural polymer of the cell wall and septum, by transferring the sugar moiety of UDP-GlcNAc to the non-reducing end of the growing chitin polymer. Shows additive effects in septum formation with CHS2, CHS3A, CHS4, CHS5, CHS6 and CHS7. Regulates mycelial growth and conidiation. Involved in virulence and mediates mycotoxin deoxinivalenol (DON) biosynthesis via the regulation of the expression of TRI4, TRI5 and TRI6. The chain is Chitin synthase 1 from Gibberella zeae (strain ATCC MYA-4620 / CBS 123657 / FGSC 9075 / NRRL 31084 / PH-1) (Wheat head blight fungus).